A 205-amino-acid chain; its full sequence is Large ribosomal subunit protein uL4 (205 aa).

Positions 56 to 76 (VSGTTAKPYRQKHTGRARQGS) are disordered.

It belongs to the universal ribosomal protein uL4 family. In terms of assembly, part of the 50S ribosomal subunit.

Its function is as follows. One of the primary rRNA binding proteins, this protein initially binds near the 5'-end of the 23S rRNA. It is important during the early stages of 50S assembly. It makes multiple contacts with different domains of the 23S rRNA in the assembled 50S subunit and ribosome. Functionally, forms part of the polypeptide exit tunnel. In Ehrlichia ruminantium (strain Welgevonden), this protein is Large ribosomal subunit protein uL4.